We begin with the raw amino-acid sequence, 430 residues long: KIN17-like protein (430 aa).

The C2H2-type zinc finger occupies C28–H50. Positions Q51 to K160 are winged helix-turn-helix (wHTH). The stretch at E147 to S183 forms a coiled coil. The Nuclear localization signal (NLS) motif lies at K155–R158. Disordered stretches follow at residues R179 to A230 and E261 to A284. The segment covering E209 to A224 has biased composition (acidic residues). Positions E261 to K278 are enriched in basic and acidic residues. A coiled-coil region spans residues D283–K312. The segment at G319–T370 is C-terminal subdomain A. Residues G376–K427 are C-terminal subdomain B.

This sequence belongs to the KIN17 family.

Its subcellular location is the nucleus. The protein is KIN17-like protein of Oryza sativa subsp. indica (Rice).